Consider the following 1889-residue polypeptide: Bromodomain adjacent to zinc finger domain protein 2A (1889 aa).

3 disordered regions span residues 1–59 (MEME…NGLS), 384–433 (FGLN…SPAA), and 479–526 (TTPV…GAVA). The segment covering 35-59 (TNGSPMNFPQQGKSLNGDVNVNGLS) has biased composition (polar residues). Positions 332 to 726 (EGNPVISALD…ESQTPVQGQA (395 aa)) are required for TTF1 binding. The segment covering 423-433 (PAVSPTASPAA) has biased composition (low complexity). Composition is skewed to polar residues over residues 479-489 (TTPVTSPQGSP) and 498-509 (QTVSPARKNVSS). Threonine 499 carries the phosphothreonine modification. Phosphoserine is present on serine 501. Residues 538-609 (IATPEEVRLP…EHFSFSPRMP (72 aa)) enclose the MBD domain. Threonine 540 is modified (phosphothreonine). At serine 605 the chain carries Phosphoserine. Positions 638-791 (QAITGKRGRP…ARPSCRADKT (154 aa)) are disordered. DNA-binding regions (a.T hook) lie at residues 641-653 (TGKRGRPRNNEKA) and 662-674 (KRGRGRPPKIKMP). Over residues 648 to 660 (RNNEKAKNKEVPK) the composition is skewed to basic and acidic residues. Residues 661–670 (VKRGRGRPPK) are compositionally biased toward basic residues. Lysine 672 carries the N6-acetyllysine; by KAT8 modification. The segment covering 678–701 (NKTDNRLPKKLETQEILSEDDKAK) has biased composition (basic and acidic residues). Residues 686 to 813 (KKLETQEILS…QQAILEEMKK (128 aa)) adopt a coiled-coil conformation. Over residues 702–713 (MTKNKKKMRQKV) the composition is skewed to basic residues. Residues 716–726 (GESQTPVQGQA) show a composition bias toward polar residues. 2 stretches are compositionally biased toward basic and acidic residues: residues 731-740 (KQDTKSLKQK) and 748-791 (AEKE…ADKT). At lysine 790 the chain carries N6-acetyllysine. The 66-residue stretch at 839-904 (SRAFSDCLTI…LKAALHDPGL (66 aa)) folds into the DDT domain. Residue lysine 857 forms a Glycyl lysine isopeptide (Lys-Gly) (interchain with G-Cter in SUMO2) linkage. The interval 1039 to 1063 (EETSGIEEEEEEENTTAVHGRRGRK) is disordered. Serine 1042 is subject to Phosphoserine. Residues 1042-1052 (SGIEEEEEEEN) are compositionally biased toward acidic residues. Residues lysine 1141 and lysine 1163 each participate in a glycyl lysine isopeptide (Lys-Gly) (interchain with G-Cter in SUMO2) cross-link. 2 disordered regions span residues 1147–1247 (LMEV…GQSQ) and 1269–1397 (LSSS…GRPP). Serine 1174 carries the post-translational modification Phosphoserine. Positions 1176–1188 (ARSRGRPRKPKPG) form a DNA-binding region, a.T hook 3. Composition is skewed to polar residues over residues 1190 to 1231 (LQPQ…QPSS), 1269 to 1278 (LSSSVLTPDS), and 1331 to 1346 (DQPTPSLQLLASSKPM). Phosphoserine is present on residues serine 1374, serine 1377, and serine 1383. Residues 1390–1402 (PKRRGRPPSKFFK) constitute a DNA-binding region (a.T hook 4). A Phosphoserine modification is found at serine 1545. Glycyl lysine isopeptide (Lys-Gly) (interchain with G-Cter in SUMO2) cross-links involve residues lysine 1662 and lysine 1695. Residues 1662 to 1712 (KVTCLVCRKGDNDEFLLLCDGCDRGCHIYCHRPKMEAVPEGDWFCAVCLSQ) form a PHD-type zinc finger. Residues 1720-1778 (QRPGFPKRGQKRKSSFPLTFPEGDSRRRMLSRSRDSPAVPRYPEDGLSPPKRRRHSMRS) are disordered. Serine 1733 carries the phosphoserine modification. Threonine 1738 bears the Phosphothreonine mark. Over residues 1742–1754 (GDSRRRMLSRSRD) the composition is skewed to basic and acidic residues. Phosphoserine occurs at positions 1755 and 1767. Over residues 1769–1778 (PKRRRHSMRS) the composition is skewed to basic residues. The Bromo domain occupies 1777–1881 (RSHHSDLTFC…RFFESRWEEF (105 aa)).

Belongs to the WAL family. Component of the NoRC-1 ISWI chromatin remodeling complex at least composed of SMARCA1 and BAZ2A/TIP5, which regulates the spacing of histone octamers on the DNA template to facilitate access to DNA. Within the NoRC-1 ISWI chromatin remodeling complex interacts with SMARCA1; the interaction is direct. Component of the NoRC-5 ISWI chromatin remodeling complex (also called the NoRC nucleolar-remodeling complex), at least composed of SMARCA5/SNF2H and BAZ2A/TIP5, which regulates the spacing of histone octamers on the DNA template to facilitate access to DNA. Within the NoRC-5 ISWI chromatin remodeling complexes interacts with SMARCA5/SNF2H; the interaction is direct. Interacts with TTF1; the interaction is required for recruitment of the NoRC-5 ISWI chromatin remodeling complex to rDNA. Interacts with HDAC1. Interacts with SIN3A. Interacts with DNMT1 and DNM3B. Interacts with BEND3 and USP21. In terms of processing, ubiquitinated. Deubiquitinated by USP21 leading to its stabilization. Acetylation at Lys-672 by KAT8/MOF promotes its dissociation from pRNA, affecting heterochromatin formation, nucleosome positioning and rDNA silencing. Deacetylation by SIRT1 in late S phase enhances pRNA-binding, allowing de novo DNA methylation and heterochromatin formation. Acetylation is high during S phase and declines to background levels in late S phase when the silent copies of rRNA genes are replicated.

The protein localises to the nucleus. The protein resides in the nucleolus. Functionally, regulatory subunit of the ATP-dependent NoRC-1 and NoRC-5 ISWI chromatin remodeling complexes, which form ordered nucleosome arrays on chromatin and facilitate access to DNA during DNA-templated processes such as DNA replication, transcription, and repair. Both complexes regulate the spacing of nucleosomes along the chromatin and have the ability to slide mononucleosomes to the center of a DNA template. Directly stimulates the ATPase activity of SMARCA5 in the NoRC-5 ISWI chromatin remodeling complex. The NoRC-1 ISWI chromatin remodeling complex has a lower ATP hydrolysis rate than the NoRC-5 ISWI chromatin remodeling complex. Within the NoRC-5 ISWI chromatin remodeling complex, mediates silencing of a fraction of rDNA by recruiting histone-modifying enzymes and DNA methyltransferases, leading to heterochromatin formation and transcriptional silencing. In the complex, it plays a central role by being recruited to rDNA and by targeting chromatin modifying enzymes such as HDAC1, leading to repress RNA polymerase I transcription. Recruited to rDNA via its interaction with TTF1 and its ability to recognize and bind histone H4 acetylated on 'Lys-16' (H4K16ac), leading to deacetylation of H4K5ac, H4K8ac, H4K12ac but not H4K16ac. Specifically binds pRNAs, 150-250 nucleotide RNAs that are complementary in sequence to the rDNA promoter; pRNA-binding is required for heterochromatin formation and rDNA silencing. This chain is Bromodomain adjacent to zinc finger domain protein 2A (Baz2a), found in Mus musculus (Mouse).